The following is a 159-amino-acid chain: U1 small nuclear ribonucleoprotein C (159 aa).

The segment at 4–36 (FYCDYCDTYLTHDSPSVRKTHCSGRKHKENVKD) adopts a Matrin-type zinc-finger fold. The interval 61–99 (KIPPTPFPGAPPPGGSLLPHPSIGGPPRPGMLPAPPMGG) is disordered. Composition is skewed to pro residues over residues 63-74 (PPTPFPGAPPPG) and 84-99 (GGPP…PMGG).

It belongs to the U1 small nuclear ribonucleoprotein C family. As to quaternary structure, component of the U1 snRNP. The U1 snRNP is composed of the U1 snRNA and the 7 core Sm proteins snrpb, snrpd1, snrpd2, snrpd3, snrpe, snrpf and snrpg that assemble in a heptameric protein ring on the Sm site of the small nuclear RNA to form the core snRNP, and at least 3 U1 snRNP-specific proteins snrnp70/U1-70K, snrpa/U1-A and snrpc/U1-C. snrpc/U1-C interacts with U1 snRNA and the 5' splice-site region of the pre-mRNA.

The protein resides in the nucleus. Functionally, component of the spliceosomal U1 snRNP, which is essential for recognition of the pre-mRNA 5' splice-site and the subsequent assembly of the spliceosome. snrpc/U1-C is directly involved in initial 5' splice-site recognition for both constitutive and regulated alternative splicing. The interaction with the 5' splice-site seems to precede base-pairing between the pre-mRNA and the U1 snRNA. Stimulates commitment or early (E) complex formation by stabilizing the base pairing of the 5' end of the U1 snRNA and the 5' splice-site region. This is U1 small nuclear ribonucleoprotein C from Danio rerio (Zebrafish).